The sequence spans 1150 residues: DNA polymerase (1150 aa).

The interval 1-53 is disordered; the sequence is MSLVQGHGTSGLFTEPPNPINQQESSGPSLPAQDAAQAFASSPRAGATSTIVN.

It belongs to the DNA polymerase type-B family. Heterodimer with the terminal protein; this heterodimer binds to bp 9 to 18 of the genome. Forms a complex with viral pTP, DBP and hosts NFIA and POU2F1/OCT1 for initiation of replication.

Its subcellular location is the host nucleus. It carries out the reaction DNA(n) + a 2'-deoxyribonucleoside 5'-triphosphate = DNA(n+1) + diphosphate. Eukaryotic-type DNA polymerase involved in viral genomic replication. DNA synthesis is protein primed, and acts in a strand displacement replication. Assembles in complex with viral pTP, DBP, host NFIA and host POU2F1/OCT1 on viral origin of replication. The polymerase covalently transfers dCMP onto pTP, thereby initiating complementary strand synthesis. The sequence is that of DNA polymerase from Canis lupus familiaris (Dog).